A 145-amino-acid chain; its full sequence is Large ribosomal subunit protein uL13 (145 aa).

This sequence belongs to the universal ribosomal protein uL13 family. As to quaternary structure, part of the 50S ribosomal subunit.

This protein is one of the early assembly proteins of the 50S ribosomal subunit, although it is not seen to bind rRNA by itself. It is important during the early stages of 50S assembly. The sequence is that of Large ribosomal subunit protein uL13 from Geobacillus kaustophilus (strain HTA426).